A 519-amino-acid chain; its full sequence is Voltage-gated potassium channel regulatory subunit KCNG4 (519 aa).

The tract at residues 1-25 (MPMPSRDGGLHPRHHHYGSHSPWSQ) is disordered. The Cytoplasmic segment spans residues 1–218 (MPMPSRDGGL…EMVENPQSGL (218 aa)). Residues 219-240 (PGKVFACLSILFVATTAVSLCV) form a helical membrane-spanning segment. The Extracellular portion of the chain corresponds to 241–261 (STMPDLRAEEDQGECSRKCYY). A helical membrane pass occupies residues 262–283 (IFIVETICVAWFSLEFCLRFVQ). Over 284–294 (AQDKCQFFQGP) the chain is Cytoplasmic. Residues 295 to 314 (LNIIDILAISPYYVSLAVSE) form a helical membrane-spanning segment. Residues 315–328 (EPPEDGERPSGSSY) are Extracellular-facing. The chain crosses the membrane as a helical; Voltage-sensor span at residues 329–353 (LEKVGLVLRVLRALRILYVMRLARH). The Cytoplasmic portion of the chain corresponds to 354–368 (SLGLQTLGLTVRRCT). Residues 369 to 390 (REFGLLLLFLAVAITLFSPLVY) form a helical membrane-spanning segment. Over 391 to 405 (VAEKESGRVLEFTSI) the chain is Extracellular. An intramembrane region (helical) is located at residues 406-417 (PASYWWAIISMT). The Selectivity filter signature appears at 418–423 (TVGYGD). The stretch at 418-425 (TVGYGDMV) is an intramembrane region. The Extracellular segment spans residues 426 to 432 (PRSVPGQ). Residues 433–461 (MVALSSILSGILIMAFPATSIFHTFSHSY) traverse the membrane as a helical segment. Topologically, residues 462–519 (LELKKEQEQLQARLRHLQNTGPASECELLDPHVASEHELMNDVNDLILEGPALPIMHM) are cytoplasmic.

Belongs to the potassium channel family. G (TC 1.A.1.2) subfamily. Kv6.4/KCNG4 sub-subfamily. In terms of assembly, heterotetramer with KCNB1. Does not form homomultimer. In terms of tissue distribution, highly expressed in brain, and at lower levels in liver, small intestine and colon.

It localises to the cell membrane. Regulatory subunit of the voltage-gated potassium (Kv) channel which, when coassembled with KCNB1, modulates the kinetics parameters of the heterotetrameric channel namely the time course of activation, deactivation and inactivation and on the voltage-dependence of activation. Potassium channel subunit that does not form functional channels by itself. Reduces the deactivation rate. Modulates the threshold for activation by shifting by approximately 20 mV in hyperpolarizing direction. Markedly changes the inactivation by shifting the voltage dependence of inactivation by approximately 40 mV in hyperpolarizing direction. Acceleratee activation and enhances the time course of activation. The chain is Voltage-gated potassium channel regulatory subunit KCNG4 from Homo sapiens (Human).